The following is a 314-amino-acid chain: 2,3,4,5-tetrahydropyridine-2,6-dicarboxylate N-succinyltransferase (314 aa).

Mg(2+) is bound by residues D163 and E180. Residue E196 is the Acyl-anhydride intermediate of the active site. Residues R198, G213, S216, A239, 254–255 (EA), G262, K274, and 287–290 (RRNS) contribute to the succinyl-CoA site.

It belongs to the type 2 tetrahydrodipicolinate N-succinyltransferase family. As to quaternary structure, homotrimer.

It is found in the cytoplasm. It carries out the reaction (S)-2,3,4,5-tetrahydrodipicolinate + succinyl-CoA + H2O = (S)-2-succinylamino-6-oxoheptanedioate + CoA. It participates in amino-acid biosynthesis; L-lysine biosynthesis via DAP pathway; LL-2,6-diaminopimelate from (S)-tetrahydrodipicolinate (succinylase route): step 1/3. In terms of biological role, catalyzes the conversion of the cyclic tetrahydrodipicolinate (THDP) into the acyclic N-succinyl-L-2-amino-6-oxopimelate using succinyl-CoA. This is 2,3,4,5-tetrahydropyridine-2,6-dicarboxylate N-succinyltransferase from Mycolicibacterium smegmatis (strain ATCC 700084 / mc(2)155) (Mycobacterium smegmatis).